The chain runs to 367 residues: Aspartate-semialdehyde dehydrogenase (367 aa).

NADP(+) contacts are provided by residues 10-13, 37-38, and glutamine 73; these read RGMV and TS. Residue arginine 102 coordinates phosphate. Catalysis depends on cysteine 135, which acts as the Acyl-thioester intermediate. Cysteine 135 is subject to S-cysteinyl cysteine; in inhibited form. Glutamine 162 lines the substrate pocket. NADP(+) contacts are provided by residues 165 to 169, arginine 173, and proline 193; that span reads SGGGA. Substrate is bound at residue glutamate 241. Lysine 244 is a binding site for phosphate. Arginine 267 contributes to the substrate binding site. Histidine 274 (proton acceptor) is an active-site residue. Glutamine 350 contacts NADP(+).

It belongs to the aspartate-semialdehyde dehydrogenase family. As to quaternary structure, homodimer.

It carries out the reaction L-aspartate 4-semialdehyde + phosphate + NADP(+) = 4-phospho-L-aspartate + NADPH + H(+). It functions in the pathway amino-acid biosynthesis; L-lysine biosynthesis via DAP pathway; (S)-tetrahydrodipicolinate from L-aspartate: step 2/4. The protein operates within amino-acid biosynthesis; L-methionine biosynthesis via de novo pathway; L-homoserine from L-aspartate: step 2/3. It participates in amino-acid biosynthesis; L-threonine biosynthesis; L-threonine from L-aspartate: step 2/5. Is inhibited by L- and D-cystine, and by other cystine derivatives, via the formation of a covalently bound cysteine at the active site Cys-135. Its function is as follows. Catalyzes the NADPH-dependent formation of L-aspartate-semialdehyde (L-ASA) by the reductive dephosphorylation of L-aspartyl-4-phosphate. The chain is Aspartate-semialdehyde dehydrogenase from Escherichia coli (strain K12).